The sequence spans 390 residues: Transposase for insertion sequence element IS256 in transposon Tn4001 (390 aa).

The protein belongs to the transposase mutator family.

Functionally, required for the transposition of the insertion element. The protein is Transposase for insertion sequence element IS256 in transposon Tn4001 of Enterococcus faecalis (strain ATCC 700802 / V583).